Here is a 429-residue protein sequence, read N- to C-terminus: Enolase (429 aa).

Residue Gln-167 coordinates (2R)-2-phosphoglycerate. The Proton donor role is filled by Glu-209. Mg(2+) is bound by residues Asp-246, Glu-289, and Asp-316. The (2R)-2-phosphoglycerate site is built by Lys-341, Arg-370, Ser-371, and Lys-392. Lys-341 (proton acceptor) is an active-site residue.

It belongs to the enolase family. In terms of assembly, component of the RNA degradosome, a multiprotein complex involved in RNA processing and mRNA degradation. It depends on Mg(2+) as a cofactor.

The protein resides in the cytoplasm. It localises to the secreted. The protein localises to the cell surface. It catalyses the reaction (2R)-2-phosphoglycerate = phosphoenolpyruvate + H2O. Its pathway is carbohydrate degradation; glycolysis; pyruvate from D-glyceraldehyde 3-phosphate: step 4/5. Functionally, catalyzes the reversible conversion of 2-phosphoglycerate (2-PG) into phosphoenolpyruvate (PEP). It is essential for the degradation of carbohydrates via glycolysis. The protein is Enolase of Cellvibrio japonicus (strain Ueda107) (Pseudomonas fluorescens subsp. cellulosa).